The chain runs to 286 residues: ATP synthase gamma chain (286 aa).

Belongs to the ATPase gamma chain family. F-type ATPases have 2 components, CF(1) - the catalytic core - and CF(0) - the membrane proton channel. CF(1) has five subunits: alpha(3), beta(3), gamma(1), delta(1), epsilon(1). CF(0) has three main subunits: a, b and c.

It localises to the cell inner membrane. Functionally, produces ATP from ADP in the presence of a proton gradient across the membrane. The gamma chain is believed to be important in regulating ATPase activity and the flow of protons through the CF(0) complex. This chain is ATP synthase gamma chain, found in Alcanivorax borkumensis (strain ATCC 700651 / DSM 11573 / NCIMB 13689 / SK2).